We begin with the raw amino-acid sequence, 860 residues long: Protein argonaute-2 (860 aa).

The disordered stretch occupies residues 1–30; the sequence is MYSGAGPALAPPAPPPPPIQGYAFKPPPRP. Tyrosine 2 is subject to 3'-nitrotyrosine. Residues 9 to 30 show a composition bias toward pro residues; that stretch reads LAPPAPPPPPIQGYAFKPPPRP. Residues 230 to 349 form the PAZ domain; it reads PVIEFVCEVL…LPLEVCNIVA (120 aa). The interval 312-317 is interaction with guide RNA; the sequence is YFKDRH. The residue at position 388 (serine 388) is a Phosphoserine. One can recognise a Piwi domain in the interval 518–819; that stretch reads LVVVILPGKT…VAFRARYHLV (302 aa). The tract at residues 525–567 is interaction with guide RNA; sequence GKTPVYAEVKRVGDTVLGMATQCVQMKNVQRTTPQTLSNLWLK. The tract at residues 588 to 591 is interaction with GW182 family members; that stretch reads FQQP. Aspartate 598 is a binding site for a divalent metal cation. The interval 651–661 is interaction with GW182 family members; the sequence is LIQFYKSTRFK. An a divalent metal cation-binding site is contributed by aspartate 670. Proline 701 carries the post-translational modification 4-hydroxyproline. Interaction with guide RNA stretches follow at residues 710 to 711, 754 to 762, and 791 to 813; these read KR, HAGIQGTSR, and YVRCTRSVSIPAPAYYAHLVAFR. Histidine 808 provides a ligand contact to a divalent metal cation. Serine 825, serine 829, serine 832, and serine 835 each carry phosphoserine.

The protein belongs to the argonaute family. Ago subfamily. As to quaternary structure, interacts with DICER1 through its Piwi domain and with TARBP2 during assembly of the RNA-induced silencing complex (RISC). Together, DICER1, AGO2 and TARBP2 constitute the trimeric RISC loading complex (RLC), or micro-RNA (miRNA) loading complex (miRLC). Within the RLC/miRLC, DICER1 and TARBP2 are required to process precursor miRNAs (pre-miRNAs) to mature miRNAs and then load them onto AGO2. AGO2 bound to the mature miRNA constitutes the minimal RISC and may subsequently dissociate from DICER1 and TARBP2. Note however that the term RISC has also been used to describe the trimeric RLC/miRLC. The formation of RISC complexes containing siRNAs rather than miRNAs appears to occur independently of DICER1. Interacts with AGO1. Also interacts with DDB1, DDX5, DDX6, DDX20, DHX30, DHX36, DDX47, DHX9, ELAVL, FXR1, GEMIN4, HNRNPF, IGF2BP1, ILF3, IMP8, MATR3, PABPC1, PRMT5, P4HA1, P4HB, RBM4, SART3, TNRC6A, TNRC6B, UPF1 and YBX1. Interacts with the P-body components DCP1A and XRN1. Associates with polysomes and messenger ribonucleoproteins (mNRPs). Interacts with RBM4; the interaction is modulated under stress-induced conditions, occurs under both cell proliferation and differentiation conditions and in an RNA- and phosphorylation-independent manner. Interacts with LIMD1, WTIP and AJUBA. Interacts with TRIM71; the interaction increases in presence of RNA. Interacts with APOBEC3G in an RNA-dependent manner. Interacts with APOBEC3A, APOBEC3C, APOBEC3F and APOBEC3H. Interacts with DICER1, TARBP2, EIF6, MOV10 and RPL7A (60S ribosome subunit); they form a large RNA-induced silencing complex (RISC). Interacts with FMR1. Interacts with ZFP36. Interacts with RC3H1; the interaction is RNA independent. Found in a complex composed of AGO2, CHD7 and ARB2A. Interacts with SND1 and SYT11. Interacts with CLNK. Interacts with GARRE1. Interacts with GRB2; this interaction is important for the formation of a ternary complex containing GRB2, AGO2 and DICER1. It depends on Mg(2+) as a cofactor. Requires Mn(2+) as cofactor. Post-translationally, hydroxylated. 4-hydroxylation appears to enhance protein stability but is not required for miRNA-binding or endonuclease activity. Ubiquitinated on surface-exposed lysines by a SCF-like E3 ubiquitin-protein ligase complex containing ZSWIM8 during target-directed microRNA degradation (TDMD), a process that mediates degradation of microRNAs (miRNAs). Ubiquitination by the SCF-like E3 ubiquitin-protein ligase complex containing ZSWIM8 leads to its subsequent degradation, thereby exposing miRNAs for degradation. ZSWIM8 recognizes and binds AGO2 when it is engaged with a TDMD target. In terms of processing, phosphorylation at Ser-388 by AKT3; leads to up-regulate translational repression of microRNA target and down-regulate endonucleolytic cleavage. Post-translationally, a phosphorylation cycle of C-terminal serine cluster (Ser-825-Ser-835) regulates the release of target mRNAs. Target-binding leads to phosphorylation of these residues by CSNK1A1, which reduces the affinity of AGO2 for mRNA and enables target release. The ANKRD52-PPP6C phosphatase complex dephosphorylates the residues, which primes AGO2 for binding a new target.

It is found in the cytoplasm. Its subcellular location is the P-body. The protein localises to the nucleus. It carries out the reaction Endonucleolytic cleavage to 5'-phosphomonoester.. Functionally, required for RNA-mediated gene silencing (RNAi) by the RNA-induced silencing complex (RISC). The 'minimal RISC' appears to include AGO2 bound to a short guide RNA such as a microRNA (miRNA) or short interfering RNA (siRNA). These guide RNAs direct RISC to complementary mRNAs that are targets for RISC-mediated gene silencing. The precise mechanism of gene silencing depends on the degree of complementarity between the miRNA or siRNA and its target. Binding of RISC to a perfectly complementary mRNA generally results in silencing due to endonucleolytic cleavage of the mRNA specifically by AGO2. Binding of RISC to a partially complementary mRNA results in silencing through inhibition of translation, and this is independent of endonuclease activity. May inhibit translation initiation by binding to the 7-methylguanosine cap, thereby preventing the recruitment of the translation initiation factor eIF4-E. May also inhibit translation initiation via interaction with EIF6, which itself binds to the 60S ribosomal subunit and prevents its association with the 40S ribosomal subunit. The inhibition of translational initiation leads to the accumulation of the affected mRNA in cytoplasmic processing bodies (P-bodies), where mRNA degradation may subsequently occur. In some cases RISC-mediated translational repression is also observed for miRNAs that perfectly match the 3' untranslated region (3'-UTR). Can also up-regulate the translation of specific mRNAs under certain growth conditions. Binds to the AU element of the 3'-UTR of the TNF (TNF-alpha) mRNA and up-regulates translation under conditions of serum starvation. Also required for transcriptional gene silencing (TGS), in which short RNAs known as antigene RNAs or agRNAs direct the transcriptional repression of complementary promoter regions. The sequence is that of Protein argonaute-2 (AGO2) from Bos taurus (Bovine).